Reading from the N-terminus, the 369-residue chain is Allantoicase (369 aa).

The disordered stretch occupies residues 341–369 (PDSKNNNNNNNNNNNNNTSNSFKTSDRQQ). The span at 345-357 (NNNNNNNNNNNNN) shows a compositional bias: low complexity.

The protein belongs to the allantoicase family.

The catalysed reaction is allantoate + H2O = (S)-ureidoglycolate + urea. The protein operates within nitrogen metabolism; (S)-allantoin degradation; (S)-ureidoglycolate from allantoate (aminidohydrolase route): step 1/1. Functionally, utilization of purines as secondary nitrogen sources, when primary sources are limiting. The polypeptide is Allantoicase (allC) (Dictyostelium discoideum (Social amoeba)).